The primary structure comprises 431 residues: Glucose-1-phosphate adenylyltransferase (431 aa).

Beta-D-fructose 1,6-bisphosphate is bound at residue Lys39. 3 residues coordinate AMP: Arg40, His46, and Arg52. Tyr114 serves as a coordination point for alpha-D-glucose 1-phosphate. Residue Arg130 participates in AMP binding. Alpha-D-glucose 1-phosphate contacts are provided by residues Gly179, Glu194–Lys195, and Ser212. Arg386 contributes to the AMP binding site. A beta-D-fructose 1,6-bisphosphate-binding site is contributed by Gln429 to Arg431.

It belongs to the bacterial/plant glucose-1-phosphate adenylyltransferase family. Homotetramer.

It catalyses the reaction alpha-D-glucose 1-phosphate + ATP + H(+) = ADP-alpha-D-glucose + diphosphate. It participates in glycan biosynthesis; glycogen biosynthesis. Allosterically activated by fructose-1,6-bisphosphate (F16BP) and inhibited by AMP. Involved in the biosynthesis of ADP-glucose, a building block required for the elongation reactions to produce glycogen. Catalyzes the reaction between ATP and alpha-D-glucose 1-phosphate (G1P) to produce pyrophosphate and ADP-Glc. This is Glucose-1-phosphate adenylyltransferase from Klebsiella pneumoniae subsp. pneumoniae (strain ATCC 700721 / MGH 78578).